A 237-amino-acid chain; its full sequence is Pyridoxal 5'-phosphate synthase subunit PdxS (237 aa).

Lysine 19 serves as the catalytic Schiff-base intermediate with D-ribose 5-phosphate. Position 91 (glycine 91) interacts with D-ribose 5-phosphate. Arginine 103 serves as a coordination point for D-glyceraldehyde 3-phosphate. D-ribose 5-phosphate is bound by residues glycine 157 and 178-179; that span reads GS.

Belongs to the PdxS/SNZ family. As to quaternary structure, in the presence of PdxT, forms a dodecamer of heterodimers.

The catalysed reaction is aldehydo-D-ribose 5-phosphate + D-glyceraldehyde 3-phosphate + L-glutamine = pyridoxal 5'-phosphate + L-glutamate + phosphate + 3 H2O + H(+). Its pathway is cofactor biosynthesis; pyridoxal 5'-phosphate biosynthesis. Functionally, catalyzes the formation of pyridoxal 5'-phosphate from ribose 5-phosphate (RBP), glyceraldehyde 3-phosphate (G3P) and ammonia. The ammonia is provided by the PdxT subunit. Can also use ribulose 5-phosphate and dihydroxyacetone phosphate as substrates, resulting from enzyme-catalyzed isomerization of RBP and G3P, respectively. The sequence is that of Pyridoxal 5'-phosphate synthase subunit PdxS from Methanococcus vannielii.